We begin with the raw amino-acid sequence, 227 residues long: Monoamine regulon transcriptional regulator (227 aa).

Positions 155-220 (EDDLPAILTA…ELVSRTWMPA (66 aa)) constitute an HTH luxR-type domain. Positions 179–198 (NKLIARQLDISLSTVKTHLR) form a DNA-binding region, H-T-H motif.

Positive regulatory protein for the induction of arylsulfatase synthesis (maoA), tyramine oxidase (tynA), maoC, maoE/F operon, and atsB/A operon which are all regulated by monoamines, and included under the common term of monoamine regulon. This chain is Monoamine regulon transcriptional regulator (moaR), found in Klebsiella aerogenes (Enterobacter aerogenes).